Here is a 489-residue protein sequence, read N- to C-terminus: Rhamnulokinase (489 aa).

13–17 (ASSGR) contributes to the ATP binding site. A disulfide bridge connects residues Cys68 and Cys222. Substrate-binding positions include Gly83 and 236–238 (HDT). Asp237 (proton acceptor) is an active-site residue. Thr259 serves as a coordination point for ATP. Substrate is bound at residue Asn296. Position 304 (Gln304) interacts with ATP. A disulfide bridge connects residues Cys353 and Cys370. Residue Gly402 coordinates ATP. Cysteines 413 and 417 form a disulfide.

Belongs to the rhamnulokinase family. Mg(2+) is required as a cofactor.

It catalyses the reaction L-rhamnulose + ATP = L-rhamnulose 1-phosphate + ADP + H(+). The protein operates within carbohydrate degradation; L-rhamnose degradation; glycerone phosphate from L-rhamnose: step 2/3. Involved in the catabolism of L-rhamnose (6-deoxy-L-mannose). Catalyzes the transfer of the gamma-phosphate group from ATP to the 1-hydroxyl group of L-rhamnulose to yield L-rhamnulose 1-phosphate. The protein is Rhamnulokinase of Salmonella paratyphi A (strain AKU_12601).